The primary structure comprises 114 residues: Protein preY, mitochondrial (114 aa).

The N-terminal 35 residues, 1-35 (MLSGARCRLASALRGTRAPPSAVARRCLHASGSRP), are a transit peptide targeting the mitochondrion. The tract at residues 14–49 (RGTRAPPSAVARRCLHASGSRPLADRGKKTEEPPRD) is disordered. The segment covering 36–49 (LADRGKKTEEPPRD) has biased composition (basic and acidic residues). One can recognise a TRM112 domain in the interval 51–97 (DPALLEFLVCPLSKKPLRYEASTNELINEELGIAYPIIDGIPNMIPQ).

Belongs to the PREY family. As to quaternary structure, interacts (via TRM112 domain) with NDUFAF5; the interaction is direct and stabilizes NDUFAF5 protein. Interacts with COQ5; the interaction is direct, stabilizes COQ5 protein and associates PYURF with COQ enzyme complex.

The protein resides in the mitochondrion. Functionally, in mitochondria, S-adenosylmethionine-dependent methyltransferase chaperone that supports both coenzyme Q biosynthesis, by stabilizing its components, such as COQ5, and NADH:ubiquinone oxidoreductase complex (complex I, MT-ND1) assembly, by stabilizing complex I assembly factors, such as NDUFAF5. This Homo sapiens (Human) protein is Protein preY, mitochondrial.